A 591-amino-acid polypeptide reads, in one-letter code: MAERTHACGKVTVEAVGQTVQLKGWVQKRRDLGGLIFIDLRDRTGIVQVVFNPETSKEALEVAETIRSEYVLHVEGTVVERGEGAINDNMATGRIEVQATKVNVLNAAKTTPIIIADDTDASEDVRLKYRYLDLRRPVMFNTFKMRHDVTKTIRNFLDTEEFLEVETPILTKSTPEGARDYLVPSRVHDGEFYALPQSPQLFKQLLMVGGFERYYQVARCFRDEDLRADRQPEFTQIDIEASFLTQDEILDMMERMMTKVMKDAKGVEVSAPFPRMKYADAMARYGSDKPDTRFEMELTDLSEFAAGCGFKVFTSAVESGGQVKAINAKGAASKYSRKDIDALTEFVKVYGAKGLAWLKVEEDGLKGPIAKFFGEEDANVLMNTLEATAGDLLLFVADKKSVVADSLGALRLRLGKELELIDESKFNFLWVTDWPLLEYDEDADRYFAAHHPFTMPFREDVELLETAPEKARAQAYDLVLNGYELGGGSLRIYERDVQEKMFKALGFSQEEAQEQFGFLLEAFEYGTPPHGGIALGLDRLVMLLAGRTNLRDTIAFPKTASASCLLTEAPSPVAEAQLEELNLKLNVKEEK.

Glu176 is a binding site for L-aspartate. Positions 200–203 are aspartate; it reads QLFK. Arg222 provides a ligand contact to L-aspartate. Residues 222 to 224 and Gln231 each bind ATP; that span reads RDE. His450 lines the L-aspartate pocket. Residue Glu484 coordinates ATP. Position 491 (Arg491) interacts with L-aspartate. Residue 536-539 participates in ATP binding; sequence GLDR.

Belongs to the class-II aminoacyl-tRNA synthetase family. Type 1 subfamily. Homodimer.

The protein localises to the cytoplasm. The catalysed reaction is tRNA(Asx) + L-aspartate + ATP = L-aspartyl-tRNA(Asx) + AMP + diphosphate. Functionally, aspartyl-tRNA synthetase with relaxed tRNA specificity since it is able to aspartylate not only its cognate tRNA(Asp) but also tRNA(Asn). Reaction proceeds in two steps: L-aspartate is first activated by ATP to form Asp-AMP and then transferred to the acceptor end of tRNA(Asp/Asn). The protein is Aspartate--tRNA(Asp/Asn) ligase of Bacillus thuringiensis (strain Al Hakam).